A 526-amino-acid polypeptide reads, in one-letter code: Probable feruloyl esterase B-1 (526 aa).

Residues 1–19 (MPSLRRLLPFLAAGSAALA) form the signal peptide. 2 cysteine pairs are disulfide-bonded: cysteine 28–cysteine 75 and cysteine 63–cysteine 114. N-linked (GlcNAc...) asparagine glycosylation is found at asparagine 53, asparagine 85, asparagine 98, and asparagine 138. Disulfide bonds link cysteine 187/cysteine 441, cysteine 256/cysteine 273, and cysteine 282/cysteine 291. Catalysis depends on serine 188, which acts as the Acyl-ester intermediate. N-linked (GlcNAc...) asparagine glycosylation occurs at asparagine 246. Ca(2+) is bound by residues aspartate 257, aspartate 260, alanine 262, aspartate 264, and isoleucine 266. Asparagine 287 and asparagine 311 each carry an N-linked (GlcNAc...) asparagine glycan. Active-site charge relay system residues include aspartate 400 and histidine 440. Asparagine 490 and asparagine 516 each carry an N-linked (GlcNAc...) asparagine glycan. An intrachain disulfide couples cysteine 503 to cysteine 525.

This sequence belongs to the tannase family.

The protein localises to the secreted. The enzyme catalyses feruloyl-polysaccharide + H2O = ferulate + polysaccharide.. In terms of biological role, involved in degradation of plant cell walls. Hydrolyzes the feruloyl-arabinose ester bond in arabinoxylans as well as the feruloyl-galactose and feruloyl-arabinose ester bonds in pectin. The polypeptide is Probable feruloyl esterase B-1 (faeB-1) (Aspergillus flavus (strain ATCC 200026 / FGSC A1120 / IAM 13836 / NRRL 3357 / JCM 12722 / SRRC 167)).